The chain runs to 394 residues: Ceramide glucosyltransferase-B (394 aa).

Over 1–10 the chain is Lumenal; sequence MAVLDLALQG. Residues 11–32 traverse the membrane as a helical segment; sequence LAIFGCILFFVLWFMHFLSIVY. Topologically, residues 33–195 are cytoplasmic; it reads TRLHLNKKVS…QVYFGTSHPR (163 aa). Residue aspartate 92 is a short sequence motif, D1. Position 144 (aspartate 144) is a short sequence motif, D2. A helical transmembrane segment spans residues 196 to 215; that stretch reads SYISANVTGIKCVTGMSCLM. The Lumenal portion of the chain corresponds to 216 to 287; that stretch reads RKEVLDQAGG…KLRINMLPAT (72 aa). Position 236 (aspartate 236) is a short sequence motif, D3. Aspartate 236 acts as the Proton acceptor in catalysis. The (Q/R)XXRW signature appears at 272–276; it reads RMIRW. Residues 288-304 form a helical membrane-spanning segment; that stretch reads IICEPISECFVASLIIG. The Cytoplasmic portion of the chain corresponds to 305-309; that stretch reads WAAHH. Residues 310–328 form a helical membrane-spanning segment; the sequence is IFRWDIMVFFMCHCLAWFI. Over 329-348 the chain is Lumenal; sequence FDYIQLRGVQGGPLNFSKLD. A helical membrane pass occupies residues 349-369; that stretch reads YAVAWFIRESMTIYIFLSALW. The Cytoplasmic portion of the chain corresponds to 370–394; the sequence is DPTISWRTGRYRLRCGGTAEEILDV.

Belongs to the glycosyltransferase 2 family.

The protein localises to the golgi apparatus membrane. The enzyme catalyses an N-acylsphing-4-enine + UDP-alpha-D-glucose = a beta-D-glucosyl-(1&lt;-&gt;1')-N-acylsphing-4-enine + UDP + H(+). The catalysed reaction is UDP-alpha-D-xylose + an N-acylsphing-4-enine = a beta-D-xylosyl-(1&lt;-&gt;1')-N-acylsphing-4-enine + UDP + H(+). It catalyses the reaction N-(9Z-octadecenoyl)-sphing-4-enine + UDP-alpha-D-xylose = beta-D-xylosyl-(1&lt;-&gt;1')-N-(9Z-octadecenoyl)-sphing-4-enine + UDP + H(+). It participates in lipid metabolism; sphingolipid metabolism. In terms of biological role, participates in the initial step of the glucosylceramide-based glycosphingolipid/GSL synthetic pathway at the cytosolic surface of the Golgi. Catalyzes the transfer of glucose from UDP-glucose to ceramide to produce glucosylceramide/GlcCer (such as beta-D-glucosyl-(1&lt;-&gt;1')-N-acylsphing-4-enine). Glucosylceramide is the core component of glycosphingolipids/GSLs, amphipathic molecules consisting of a ceramide lipid moiety embedded in the outer leaflet of the membrane, linked to one of hundreds of different externally oriented oligosaccharide structures. Glycosphingolipids are essential components of membrane microdomains that mediate membrane trafficking and signal transduction. They are implicated in many fundamental cellular processes, including growth, differentiation, migration, morphogenesis, cell-to-cell and cell-to-matrix interactions. Catalyzes the synthesis of xylosylceramide/XylCer (such as beta-D-xylosyl-(1&lt;-&gt;1')-N-acylsphing-4-enine) using UDP-Xyl as xylose donor. The polypeptide is Ceramide glucosyltransferase-B (ugcg-b) (Xenopus laevis (African clawed frog)).